We begin with the raw amino-acid sequence, 560 residues long: Dihydroxy-acid dehydratase (560 aa).

Residue Cys-52 participates in [2Fe-2S] cluster binding. A Mg(2+)-binding site is contributed by Asp-84. Cys-125 serves as a coordination point for [2Fe-2S] cluster. 2 residues coordinate Mg(2+): Asp-126 and Lys-127. At Lys-127 the chain carries N6-carboxylysine. [2Fe-2S] cluster is bound at residue Cys-197. Glu-448 lines the Mg(2+) pocket. The active-site Proton acceptor is Ser-474.

It belongs to the IlvD/Edd family. In terms of assembly, homodimer. Requires [2Fe-2S] cluster as cofactor. Mg(2+) is required as a cofactor.

It carries out the reaction (2R)-2,3-dihydroxy-3-methylbutanoate = 3-methyl-2-oxobutanoate + H2O. The catalysed reaction is (2R,3R)-2,3-dihydroxy-3-methylpentanoate = (S)-3-methyl-2-oxopentanoate + H2O. Its pathway is amino-acid biosynthesis; L-isoleucine biosynthesis; L-isoleucine from 2-oxobutanoate: step 3/4. It participates in amino-acid biosynthesis; L-valine biosynthesis; L-valine from pyruvate: step 3/4. In terms of biological role, functions in the biosynthesis of branched-chain amino acids. Catalyzes the dehydration of (2R,3R)-2,3-dihydroxy-3-methylpentanoate (2,3-dihydroxy-3-methylvalerate) into 2-oxo-3-methylpentanoate (2-oxo-3-methylvalerate) and of (2R)-2,3-dihydroxy-3-methylbutanoate (2,3-dihydroxyisovalerate) into 2-oxo-3-methylbutanoate (2-oxoisovalerate), the penultimate precursor to L-isoleucine and L-valine, respectively. This Francisella tularensis subsp. novicida (strain U112) protein is Dihydroxy-acid dehydratase.